A 212-amino-acid polypeptide reads, in one-letter code: Suppressor of cytokine signaling 1 (212 aa).

The segment at 1–55 (MVARNQVAADNAISPAAEPRRRSEPSSSSSSSSPAAPVRPRPCPAVPAPAPGDTH) is disordered. Residues 25–36 (PSSSSSSSSPAA) are compositionally biased toward low complexity. Residues 37 to 50 (PVRPRPCPAVPAPA) show a composition bias toward pro residues. The kinase inhibitory region (KIR) stretch occupies residues 56-67 (FRTFRSHSDYRR). The segment at 68–79 (ITRTSALLDACG) is extended SH2 subdomain (ESS). The SH2 domain occupies 80–175 (FYWGPLSVHG…PLRQRRVRPL (96 aa)). The SOCS box domain maps to 162–211 (MLGAPLRQRRVRPLQELCRQRIVAAVGRENLARIPLNPVLRDYLSSFPFQ). The segment at 174–183 (PLQELCRQRI) is interaction with Elongin BC complex.

Belongs to the SOCS1 family. As to quaternary structure, interacts with multiple activated proteins of the tyrosine kinase signaling pathway including JAK family kinases, TEC, KIT, GRB2 and VAV. Binding to JAKs is mediated through the KIR and SH2 domain to a phosphorylated tyrosine residue within the JAK JH1 domain. Binds the SH3 domain of GRB2 via diproline determinants in the N-terminus, and the N-terminal regulatory domain of VAV. Interacts with the Elongin BC complex (ELOB and ELOC). Component of an ECS CBC(SOCS1) E3 ubiquitin-protein ligase complex which contains Elongin BC, CUL5, RBX1 and SOCS1. Interacts (via SH2 domain and SOCS box) with TRIM8. Interacts with CUL2. Interacts with AXL and FGFR3. Interacts with INSR. Interacts with TRIM8. Interacts with DCUN1D1. Interacts with IFNGR1. High expression in thymus. Lower expression in lung and spleen. Expressed in both Th1 and Th2 cells.

The protein resides in the nucleus. The protein localises to the cytoplasmic vesicle. The protein operates within protein modification; protein ubiquitination. In terms of biological role, essential negative regulator of type I and type II interferon (IFN) signaling, as well as that of other cytokines, including IL2, IL4, IL6 and leukemia inhibitory factor (LIF). Downregulates cytokine signaling by inhibiting the JAK/STAT signaling pathway. Acts by binding to JAK proteins and to IFNGR1 and inhibiting their kinase activity. In vitro, suppresses Tec protein-tyrosine activity. Regulates IFN-gamma (IFNG)-mediated sensory neuron survival. Probable substrate recognition component of an ECS (Elongin BC-CUL2/5-SOCS-box protein) E3 ubiquitin ligase complex which mediates the ubiquitination and subsequent proteasomal degradation of target proteins. The sequence is that of Suppressor of cytokine signaling 1 from Mus musculus (Mouse).